Consider the following 376-residue polypeptide: UDP-N-acetylglucosamine 2-epimerase (376 aa).

Substrate-binding positions include Arg10, Lys15, Asp95, Glu117, His213, Gln271, Phe276, 290-292 (SGG), Glu296, and Arg313.

Belongs to the UDP-N-acetylglucosamine 2-epimerase family. In terms of assembly, homodimer.

Its subcellular location is the cytoplasm. The enzyme catalyses UDP-N-acetyl-alpha-D-glucosamine = UDP-N-acetyl-alpha-D-mannosamine. It functions in the pathway bacterial outer membrane biogenesis; enterobacterial common antigen biosynthesis. Functionally, catalyzes the reversible epimerization at C-2 of UDP-N-acetylglucosamine (UDP-GlcNAc) and thereby provides bacteria with UDP-N-acetylmannosamine (UDP-ManNAc), the activated donor of ManNAc residues. The sequence is that of UDP-N-acetylglucosamine 2-epimerase from Salmonella typhimurium (strain LT2 / SGSC1412 / ATCC 700720).